The following is a 341-amino-acid chain: MLRTTSRTFSRALSSSNFKINCGRRHWFSVLTLLEHQGGNLSPASLSAVEAAKRTGGDVFGFVIGKDSSQISQKVAKSVNDLKKVIYVENPSYEHNIPDQIANVLFENVKKNEISHVFSAHSTVGKGVMPRLAAMFDVMQISDIIGVVSADTFVRPTYAGNVNVTVSTKDPIKIVTVRASAFDAAPSSGEGAATVVEGIDPKPAALQEWVSENIIKNARPDLSSAERVVAGGRPLKDKETFERILTPLADKLGAAIGATRVAVDSGYADNSLQIGQTGKIIAPKLYIAVGIDGAIQHLAGIKDSKVIAAINRDENAPIFQTADVGIVGDLFEIVPELTEKL.

285–313 (LYIAVGIDGAIQHLAGIKDSKVIAAINRD) is a binding site for FAD.

The protein belongs to the ETF alpha-subunit/FixB family. As to quaternary structure, heterodimer of an alpha and a beta subunit. Requires FAD as cofactor.

It is found in the mitochondrion matrix. In terms of biological role, the electron transfer flavoprotein serves as a specific electron acceptor for several dehydrogenases, including five acyl-CoA dehydrogenases, glutaryl-CoA and sarcosine dehydrogenase. It transfers the electrons to the main mitochondrial respiratory chain via ETF-ubiquinone oxidoreductase (ETF dehydrogenase). The sequence is that of Probable electron transfer flavoprotein subunit alpha, mitochondrial from Schizosaccharomyces pombe (strain 972 / ATCC 24843) (Fission yeast).